Here is a 335-residue protein sequence, read N- to C-terminus: Mitochondrial amidoxime reducing component 2 (335 aa).

Residues 1–35 constitute a mitochondrion transit peptide; the sequence is MGASSSSALARLGLPARPWPRWLGVAALGLAAVAL. Glycyl lysine isopeptide (Lys-Gly) (interchain with G-Cter in ubiquitin) cross-links involve residues lysine 59, lysine 138, and lysine 144. Residue lysine 156 is modified to N6-acetyllysine; alternate. Lysine 156 participates in a covalent cross-link: Glycyl lysine isopeptide (Lys-Gly) (interchain with G-Cter in ubiquitin); alternate. Glycyl lysine isopeptide (Lys-Gly) (interchain with G-Cter in ubiquitin) cross-links involve residues lysine 166, lysine 173, lysine 187, lysine 287, and lysine 294. In terms of domain architecture, MOSC spans 188 to 334; sequence GRTSRKLLPT…LRVGDPVYRM (147 aa).

Component of a complex composed of cytochrome b5, NADH-cytochrome b5 reductase (CYB5R3) and MTARC2. Requires Mo-molybdopterin as cofactor. Ubiquitinated by PRKN during mitophagy, leading to its degradation and enhancement of mitophagy. Deubiquitinated by USP30.

It is found in the mitochondrion outer membrane. Its subcellular location is the peroxisome. The catalysed reaction is N(omega)-hydroxy-L-arginine + 2 Fe(II)-[cytochrome b5] + 2 H(+) = L-arginine + 2 Fe(III)-[cytochrome b5] + H2O. Functionally, catalyzes the reduction of N-oxygenated molecules, acting as a counterpart of cytochrome P450 and flavin-containing monooxygenases in metabolic cycles. As a component of prodrug-converting system, reduces a multitude of N-hydroxylated prodrugs particularly amidoximes, leading to increased drug bioavailability. May be involved in mitochondrial N(omega)-hydroxy-L-arginine (NOHA) reduction, regulating endogenous nitric oxide levels and biosynthesis. Postulated to cleave the N-OH bond of N-hydroxylated substrates in concert with electron transfer from NADH to cytochrome b5 reductase then to cytochrome b5, the ultimate electron donor that primes the active site for substrate reduction. This chain is Mitochondrial amidoxime reducing component 2, found in Homo sapiens (Human).